Consider the following 95-residue polypeptide: Co-chaperonin GroES (95 aa).

This sequence belongs to the GroES chaperonin family. As to quaternary structure, heptamer of 7 subunits arranged in a ring. Interacts with the chaperonin GroEL.

The protein localises to the cytoplasm. Its function is as follows. Together with the chaperonin GroEL, plays an essential role in assisting protein folding. The GroEL-GroES system forms a nano-cage that allows encapsulation of the non-native substrate proteins and provides a physical environment optimized to promote and accelerate protein folding. GroES binds to the apical surface of the GroEL ring, thereby capping the opening of the GroEL channel. This Rickettsia rickettsii (strain Sheila Smith) protein is Co-chaperonin GroES.